Consider the following 808-residue polypeptide: DNA gyrase subunit B (808 aa).

The Toprim domain occupies 429-544; the sequence is SELFIVEGDS…KGYLYIAQPP (116 aa). Mg(2+) is bound by residues Glu-435, Asp-509, and Asp-511.

The protein belongs to the type II topoisomerase GyrB family. In terms of assembly, heterotetramer, composed of two GyrA and two GyrB chains. In the heterotetramer, GyrA contains the active site tyrosine that forms a transient covalent intermediate with DNA, while GyrB binds cofactors and catalyzes ATP hydrolysis. The cofactor is Mg(2+). It depends on Mn(2+) as a cofactor. Requires Ca(2+) as cofactor.

Its subcellular location is the cytoplasm. It catalyses the reaction ATP-dependent breakage, passage and rejoining of double-stranded DNA.. Functionally, a type II topoisomerase that negatively supercoils closed circular double-stranded (ds) DNA in an ATP-dependent manner to modulate DNA topology and maintain chromosomes in an underwound state. Negative supercoiling favors strand separation, and DNA replication, transcription, recombination and repair, all of which involve strand separation. Also able to catalyze the interconversion of other topological isomers of dsDNA rings, including catenanes and knotted rings. Type II topoisomerases break and join 2 DNA strands simultaneously in an ATP-dependent manner. This is DNA gyrase subunit B from Rickettsia felis (strain ATCC VR-1525 / URRWXCal2) (Rickettsia azadi).